The following is a 301-amino-acid chain: tRNA dimethylallyltransferase (301 aa).

ATP is bound at residue 2 to 9 (GPTASGKT). Residue 4-9 (TASGKT) participates in substrate binding. Interaction with substrate tRNA stretches follow at residues 27–30 (DSAM) and 151–155 (QRIQR).

It belongs to the IPP transferase family. As to quaternary structure, monomer. Mg(2+) is required as a cofactor.

It carries out the reaction adenosine(37) in tRNA + dimethylallyl diphosphate = N(6)-dimethylallyladenosine(37) in tRNA + diphosphate. Its function is as follows. Catalyzes the transfer of a dimethylallyl group onto the adenine at position 37 in tRNAs that read codons beginning with uridine, leading to the formation of N6-(dimethylallyl)adenosine (i(6)A). The protein is tRNA dimethylallyltransferase of Coxiella burnetii (strain CbuK_Q154) (Coxiella burnetii (strain Q154)).